The primary structure comprises 326 residues: Archaeal actin homolog (326 aa).

Residues 10–14, Ser179, Gln231, 285–288, and Gln311 each bind ATP; these read YGDTK and GGAN.

This sequence belongs to the thermophilic archaeal actin family.

Functionally, polymerizes into bundles of filaments. Polymerization requires NTP and is optimal with ATP, but GTP, UTP, CTP, and even the deoxy form of NTP can also support the polymerization reaction. The protein is Archaeal actin homolog of Thermoplasma volcanium (strain ATCC 51530 / DSM 4299 / JCM 9571 / NBRC 15438 / GSS1).